Consider the following 778-residue polypeptide: Probable potassium transporter 13 (778 aa).

The Cytoplasmic portion of the chain corresponds to 1 to 28 (MDVEGGGGGGGGAPPRGRNSWGWQKGTL). The chain crosses the membrane as a helical span at residues 29 to 49 (LLAYQSFGVVYGDLCISPVYV). The Extracellular portion of the chain corresponds to 50–72 (YKNTFSGKLRLHEEDEEILGVLS). A helical membrane pass occupies residues 73-93 (LVFWSLTLIPLLKYIILVLGA). Residues 94 to 156 (DDNGEGGTFA…AFFEKHYSLR (63 aa)) are Cytoplasmic-facing. Residues 157 to 177 (VVLLLFVLMGTSMVIGDGVLT) traverse the membrane as a helical segment. At 178-199 (PTMSVLAAVSGLRIKFPELHEN) the chain is on the extracellular side. N199 is a glycosylation site (N-linked (GlcNAc...) asparagine). A helical transmembrane segment spans residues 200–220 (YTVLLACVILIGLFALQHYGT). The Cytoplasmic portion of the chain corresponds to 221 to 222 (RR). A helical membrane pass occupies residues 223 to 243 (VGFLFAPILISWLTCIGGIGI). Residues 244 to 276 (YNIIKWNPSVIRALSPYYIYNFFRKAGKDGWSS) are Extracellular-facing. A helical transmembrane segment spans residues 277–297 (LGGIVLCLTGAEAMFADLGHF). Residues 298–303 (SKLSLR) lie on the Cytoplasmic side of the membrane. A helical membrane pass occupies residues 304 to 324 (LGFTIVVYPCLVLAYMGEAAY). Over 325–343 (LSKHREDLQSSFYKALPDR) the chain is Extracellular. A helical membrane pass occupies residues 344 to 364 (VFWPVLFIATLATAVGSQAII). Residues 365 to 395 (SATFSIISQCRALGCFPRIKVVHTSSHVHGQ) are Cytoplasmic-facing. Residues 396–416 (IYIPEVNWVLMSLCLAVTIGF) form a helical membrane-spanning segment. Residues 417-424 (RDTEMIGN) are Extracellular-facing. The helical transmembrane segment at 425–445 (AYGLAVILVMCATTCLMFLVI) threads the bilayer. Topologically, residues 446 to 451 (TTVWNR) are cytoplasmic. A helical transmembrane segment spans residues 452 to 472 (WVVWAAAFTVVFGSVELLYLS). The Extracellular segment spans residues 473-477 (ACLAK). The helical transmembrane segment at 478-498 (VPHGGWLPLLLSLTTLLVMST) threads the bilayer. Residues 499-778 (WHYGTAMKQQ…LIEVGMAYRV (280 aa)) lie on the Cytoplasmic side of the membrane. Residues 655-677 (PATSSSGGSNQHAFDAGTTTSSC) show a composition bias toward polar residues. The tract at residues 655-704 (PATSSSGGSNQHAFDAGTTTSSCEIDATAGGGGRRKVRFDNDGGGGGEEE) is disordered.

It belongs to the HAK/KUP transporter (TC 2.A.72.3) family.

Its subcellular location is the membrane. Its function is as follows. High-affinity potassium transporter. The protein is Probable potassium transporter 13 (HAK13) of Oryza sativa subsp. japonica (Rice).